A 244-amino-acid chain; its full sequence is MNKGKFALLFTFAACFAVIVFFWLLAVPPENFTADRIVMVLLISPIFAILLAFNLSRFLKQHGYSLRQVHVALEQNIADFIYEFQRLVFIHLMPIAFLGALIFYYGEFTPAIAEFLSLFALIFALSPLLFLGISFFVAMLQVYERVRKKSLLRANFFNFWIWIHLFVILLIIISKVLVQPSELPFQKAYFKALNDGVFNLLIIATMNAIFGVTGRMVAREKFPILLHLSIPLVNSFVAVKILMA.

6 helical membrane-spanning segments follow: residues Lys5–Val27, Ile37–Leu59, Leu87–Gly106, Leu116–Ala138, Phe159–Ser181, and Gly196–Ala218.

The protein localises to the cell membrane. This is an uncharacterized protein from Archaeoglobus fulgidus (strain ATCC 49558 / DSM 4304 / JCM 9628 / NBRC 100126 / VC-16).